The following is a 563-amino-acid chain: Glucocorticoid modulatory element-binding protein 1 (563 aa).

An N-acetylalanine modification is found at Ala2. The SAND domain occupies 72-156 (ASTIEANEDM…RKMMDSGQID (85 aa)). Residue Cys103 participates in Zn(2+) binding. Residues Lys129, Lys133, Lys136, and Arg147 each contribute to the DNA site. Positions 160, 164, and 168 each coordinate Zn(2+). Positions 304 to 355 (MDTVKKVLDNRKNQVEQGEEQFLYTLTDLERQLEEQKKQAQDHRLKSQTVQN) form a coiled coil. Residues 360-385 (PVSTPKPPKRPRLQRPASTTVLSPSP) form a disordered region.

Homodimer, and heterodimer of GMEB1 and GMEB2. Interacts with TRIM63. Interacts with the glucocorticoid receptor (NR3C1) and NCOA2/TIF2. May interact with HSP27 and CREB-binding protein (CBP).

The protein resides in the nucleus. It localises to the cytoplasm. In terms of biological role, trans-acting factor that binds to glucocorticoid modulatory elements (GME) present in the TAT (tyrosine aminotransferase) promoter and increases sensitivity to low concentrations of glucocorticoids. Also binds to the transferrin receptor promoter. The polypeptide is Glucocorticoid modulatory element-binding protein 1 (GMEB1) (Bos taurus (Bovine)).